We begin with the raw amino-acid sequence, 3418 residues long: Breast cancer type 2 susceptibility protein (3418 aa).

Residues 1 to 40 (MPIGSKERPTFFEIFKTRCNKADLGPISLNWFEELSSEAP) are interaction with PALB2. A disordered region spans residues 37 to 68 (SEAPPYNSEPAEESEHKNNNYEPNLFKTPQRK). The residue at position 70 (serine 70) is a Phosphoserine. A disordered region spans residues 358-381 (VEPNDTDPLDSNVANQKPFESGSD). Phosphoserine occurs at positions 445, 492, and 755. The interaction with NPM1 stretch occupies residues 639–1000 (LHSSVKRSCS…NKWAGLLGPI (362 aa)). BRCA2 repeat units follow at residues 1002-1036 (NHSF…DIEE), 1212-1246 (NEVG…DIEN), 1421-1455 (FETS…QKPE), 1517-1551 (KEPT…EKEQ), 1664-1698 (IENS…EGIF), and 1837-1871 (FEVG…DSFS). The interval 1003 to 2082 (HSFGGSFRTA…LHKVKGVLEE (1080 aa)) is interaction with RAD51. The tract at residues 1338–1781 (GSDSSKNDTV…IEPVLKNVED (444 aa)) is interaction with POLH. The segment at 1410–1595 (TATKTEQNIK…TAAPKCKEMQ (186 aa)) is required for stimulation of POLH DNA polymerization activity. Serine 1970 carries the post-translational modification Phosphoserine. Residues 1971–2005 (SANTCGIFSTASGKSVQVSDASLQNARQVFSEIED) form a BRCA2 7 repeat. Threonine 2035 carries the phosphothreonine modification. The stretch at 2051–2085 (NSSAFSGFSTASGKQVSILESSLHKVKGVLEEFDL) is one BRCA2 8 repeat. At serine 2095 the chain carries Phosphoserine. The segment at 2270-2337 (GKRRGEPLIL…EPITCVPFRT (68 aa)) is interaction with HSF2BP. Positions 2350–2545 (TAPGQEFLSK…SHKQLYTYGV (196 aa)) are interaction with FANCD2. The interval 2430–2450 (ENRQKQNIDGHGSDDSKNKIN) is disordered. The interval 2481 to 2832 (ITSLQNARDI…QRAYPIQWME (352 aa)) is interaction with SEM1. Residues 2682-2698 (AAKTLVLCVSDIISLSA) carry the Nuclear export signal; masked by interaction with SEM1 motif. Serine 3291 carries the post-translational modification Phosphoserine; by CDK1 and CDK2. Position 3319 is a phosphoserine (serine 3319). Threonine 3387 bears the Phosphothreonine; by CHEK1 and CHEK2 mark. Positions 3393 to 3418 (EQESSQASTEECEKNKQDTITTKKYI) are disordered.

Monomer and dimer. Interacts with RAD51; regulates RAD51 recruitment and function at sites of DNA repair. Interacts with WDR16, USP11, DMC1, ROCK2 and NPM1. Interacts with SEM1; the interaction masks a nuclear export signal in BRCA2. Interacts with both nonubiquitinated and monoubiquitinated FANCD2; this complex also includes XRCC3 and phosphorylated FANCG. Part of a BRCA complex containing BRCA1, BRCA2 and PALB2. Component of the homologous recombination repair (HR) complex composed of ERCC5/XPG, BRCA2, PALB2, DSS1 and RAD51. Within the complex, interacts with ERCC5/XPG and PALB2. Interacts directly with PALB2 which may serve as a scaffold for a HR complex containing PALB2, BRCA2, RAD51C, RAD51 and XRCC3. Interacts with BRCA1 only in the presence of PALB2 which serves as the bridging protein. Interacts with POLH; the interaction is direct. Interacts with the TREX-2 complex subunits PCID2 and SEM1. Interacts with HSF2BP and BRME1; the interaction with HSF2BP is direct and allows the formation of a ternary complex. The complex BRME1:HSF2BP:BRCA2 interacts with SPATA22, MEIOB and RAD51. Post-translationally, phosphorylated by ATM upon irradiation-induced DNA damage. Phosphorylation by CHEK1 and CHEK2 regulates interaction with RAD51. Phosphorylation at Ser-3291 by CDK1 and CDK2 is low in S phase when recombination is active, but increases as cells progress towards mitosis; this phosphorylation prevents homologous recombination-dependent repair during S phase and G2 by inhibiting RAD51 binding. Ubiquitinated in the absence of DNA damage; this does not lead to proteasomal degradation. In contrast, ubiquitination in response to DNA damage leads to proteasomal degradation. Highest levels of expression in breast and thymus, with slightly lower levels in lung, ovary and spleen.

The protein resides in the nucleus. It is found in the cytoplasm. It localises to the cytoskeleton. The protein localises to the microtubule organizing center. Its subcellular location is the centrosome. Involved in double-strand break repair and/or homologous recombination. Binds RAD51 and potentiates recombinational DNA repair by promoting assembly of RAD51 onto single-stranded DNA (ssDNA). Acts by targeting RAD51 to ssDNA over double-stranded DNA, enabling RAD51 to displace replication protein-A (RPA) from ssDNA and stabilizing RAD51-ssDNA filaments by blocking ATP hydrolysis. Part of a PALB2-scaffolded HR complex containing RAD51C and which is thought to play a role in DNA repair by HR. May participate in S phase checkpoint activation. Binds selectively to ssDNA, and to ssDNA in tailed duplexes and replication fork structures. May play a role in the extension step after strand invasion at replication-dependent DNA double-strand breaks; together with PALB2 is involved in both POLH localization at collapsed replication forks and DNA polymerization activity. In concert with NPM1, regulates centrosome duplication. Interacts with the TREX-2 complex (transcription and export complex 2) subunits PCID2 and SEM1, and is required to prevent R-loop-associated DNA damage and thus transcription-associated genomic instability. Silencing of BRCA2 promotes R-loop accumulation at actively transcribed genes in replicating and non-replicating cells, suggesting that BRCA2 mediates the control of R-loop associated genomic instability, independently of its known role in homologous recombination. The sequence is that of Breast cancer type 2 susceptibility protein from Homo sapiens (Human).